The chain runs to 309 residues: Foldase protein PrsA (309 aa).

The signal sequence occupies residues 1–22 (MKTRSKLAAGFLTLMSVATLAA). Cysteine 23 carries the N-palmitoyl cysteine lipid modification. Cysteine 23 carries the S-diacylglycerol cysteine lipid modification. In terms of domain architecture, PpiC spans 146-241 (TPETSVQVIK…TSYYIIKVTD (96 aa)).

Belongs to the PrsA family.

The protein localises to the cell membrane. It catalyses the reaction [protein]-peptidylproline (omega=180) = [protein]-peptidylproline (omega=0). Plays a major role in protein secretion by helping the post-translocational extracellular folding of several secreted proteins. The sequence is that of Foldase protein PrsA from Streptococcus agalactiae serotype Ia (strain ATCC 27591 / A909 / CDC SS700).